The following is a 618-amino-acid chain: Poly(A)-specific ribonuclease PARN-like (618 aa).

A divalent metal cation contacts are provided by Ser54, Gln56, Asp332, and Asn418. The tract at residues 588 to 607 is disordered; it reads ALESSDTDPDSDTKPSEIDW.

This sequence belongs to the CAF1 family. It depends on a divalent metal cation as a cofactor.

It localises to the nucleus. The protein localises to the cytoplasm. It carries out the reaction Exonucleolytic cleavage of poly(A) to 5'-AMP.. In terms of biological role, 3'-exoribonuclease that has a preference for poly(A) tails of mRNAs, thereby efficiently degrading poly(A) tails. Exonucleolytic degradation of the poly(A) tail is often the first step in the decay of eukaryotic mRNAs. The chain is Poly(A)-specific ribonuclease PARN-like from Arabidopsis thaliana (Mouse-ear cress).